The chain runs to 420 residues: Pyruvate dehydrogenase E1 component subunit alpha, mitochondrial (420 aa).

The transit peptide at 1 to 33 (MLAASFKRQPSQLVRGLGAVLRTPTRIGHVRTM) directs the protein to the mitochondrion. Residues His112, Tyr138, Arg139, Ala177, Gly185, Val187, Asp216, Gly217, Ala218, Asn245, and Tyr247 each coordinate pyruvate. Thiamine diphosphate is bound by residues Tyr138 and Arg139. 6 residues coordinate thiamine diphosphate: Gly185, Val187, Asp216, Gly217, Ala218, and Asn245. Asp216 is a binding site for Mg(2+). Residues Asn245 and Tyr247 each coordinate Mg(2+). His312 contacts thiamine diphosphate. Ser313 bears the Phosphoserine; by PDK1 and PDK2 mark.

As to quaternary structure, pyruvate dehydrogenase (E1) is a tetramer of 2 alpha and 2 beta subunits. Eukaryotic pyruvate dehydrogenase (PDH) complexes are organized as a core consisting of the oligomeric dihydrolipoamide acetyl-transferase (E2), around which are arranged multiple copies of pyruvate dehydrogenase (E1), dihydrolipoamide dehydrogenase (E3) and protein X (E3BP) bound by non-covalent bonds. Requires thiamine diphosphate as cofactor. Mg(2+) is required as a cofactor. Phosphorylated at Ser-313 by pyruvate dehydrogenase kinases PKP1 (PDK1) and PKP2 (PDK2), and dephosphorylated by pyruvate dehydrogenase phosphatases PTC5 and PTC6.

It localises to the mitochondrion matrix. It carries out the reaction N(6)-[(R)-lipoyl]-L-lysyl-[protein] + pyruvate + H(+) = N(6)-[(R)-S(8)-acetyldihydrolipoyl]-L-lysyl-[protein] + CO2. Its activity is regulated as follows. E1 activity is regulated by phosphorylation (inactivation) and dephosphorylation (activation) of the alpha subunit. In terms of biological role, the pyruvate dehydrogenase complex catalyzes the overall conversion of pyruvate to acetyl-CoA and CO(2). The sequence is that of Pyruvate dehydrogenase E1 component subunit alpha, mitochondrial (PDA1) from Saccharomyces cerevisiae (strain ATCC 204508 / S288c) (Baker's yeast).